Consider the following 122-residue polypeptide: MIQPQTYLNVADNSGARKLMCIRIIGASNRRYAHIGDVIVAVIKEAIPNTPLERSEVIRAVIVRTCKELKRNNGTIIRYDDNAAVVIDQEGNPKGTRVFGAIPRELRQLNFTKIVSLAPEVL.

It belongs to the universal ribosomal protein uL14 family. In terms of assembly, part of the 50S ribosomal subunit.

Its subcellular location is the plastid. The protein localises to the chloroplast. Functionally, binds to 23S rRNA. The polypeptide is Large ribosomal subunit protein uL14c (Capsella bursa-pastoris (Shepherd's purse)).